The sequence spans 165 residues: Sorting nexin-12 (165 aa).

A disordered region spans residues 1–20 (MSDTAVADTRRLNSKPQDLT). At Ser-2 the chain carries N-acetylserine. Tyr-23 is subject to Phosphotyrosine. The PX domain maps to 28–151 (NFLEIDIFNP…HMFLQEEAID (124 aa)). 4 residues coordinate a 1,2-diacyl-sn-glycero-3-phospho-(1D-myo-inositol-3-phosphate): Arg-71, Ser-73, Lys-96, and Arg-118. A Phosphoserine modification is found at Ser-73.

This sequence belongs to the sorting nexin family.

Its subcellular location is the membrane. Functionally, may be involved in several stages of intracellular trafficking. This chain is Sorting nexin-12 (Snx12), found in Mus musculus (Mouse).